Reading from the N-terminus, the 141-residue chain is Nucleoside diphosphate kinase (141 aa).

Residues Lys-11, Phe-59, Arg-87, Thr-93, Arg-104, and Asn-114 each coordinate ATP. His-117 serves as the catalytic Pros-phosphohistidine intermediate.

The protein belongs to the NDK family. Homotetramer. Mg(2+) serves as cofactor.

Its subcellular location is the cytoplasm. It carries out the reaction a 2'-deoxyribonucleoside 5'-diphosphate + ATP = a 2'-deoxyribonucleoside 5'-triphosphate + ADP. The catalysed reaction is a ribonucleoside 5'-diphosphate + ATP = a ribonucleoside 5'-triphosphate + ADP. Major role in the synthesis of nucleoside triphosphates other than ATP. The ATP gamma phosphate is transferred to the NDP beta phosphate via a ping-pong mechanism, using a phosphorylated active-site intermediate. This chain is Nucleoside diphosphate kinase, found in Methylibium petroleiphilum (strain ATCC BAA-1232 / LMG 22953 / PM1).